Reading from the N-terminus, the 288-residue chain is GDSL esterase/lipase At3g43550 (288 aa).

An N-terminal signal peptide occupies residues 1–19; it reads MKLQIIWLALVLIAVETYA. N25 is a glycosylation site (N-linked (GlcNAc...) asparagine). S37 acts as the Nucleophile in catalysis.

The protein belongs to the 'GDSL' lipolytic enzyme family.

Its subcellular location is the secreted. This chain is GDSL esterase/lipase At3g43550, found in Arabidopsis thaliana (Mouse-ear cress).